The following is a 318-amino-acid chain: Sensor histidine kinase NatK (318 aa).

The next 3 membrane-spanning stretches (helical) occupy residues 4–24 (LFQCLYLILFSFICYQGAAAF), 27–47 (STAASWLAAALGAAAAGLYIW), and 72–82 (VGVVLIGTDIM). Residues 132–318 (RNHDTMKHIT…RLEIKIPFQK (187 aa)) enclose the Histidine kinase domain. His134 carries the phosphohistidine; by autocatalysis modification.

Its subcellular location is the cell membrane. The enzyme catalyses ATP + protein L-histidine = ADP + protein N-phospho-L-histidine.. In terms of biological role, member of the two-component regulatory system NatK/NatR that positively regulates the expression of the natAB operon. Potentially phosphorylates NatR. This is Sensor histidine kinase NatK from Bacillus subtilis (strain 168).